The sequence spans 422 residues: Histone deacetylase B (422 aa).

D102 is a substrate binding site. H144 (proton acceptor) is an active-site residue. Residue G152 participates in substrate binding. A divalent metal cation-binding residues include D179, H181, and D268. Y307 contacts substrate. The interval 399–422 (IDFDRDEDSKENMDKRKKKHNDFS) is disordered. Residues 413–422 (KRKKKHNDFS) are compositionally biased toward basic residues.

Belongs to the histone deacetylase family. HD type 1 subfamily.

Its subcellular location is the nucleus. The protein localises to the cytoplasm. It carries out the reaction N(6)-acetyl-L-lysyl-[histone] + H2O = L-lysyl-[histone] + acetate. Its activity is regulated as follows. Its activity is inhibited by trichostatin A (TSA), a well known histone deacetylase inhibitor. Cytosolic activity is refractory to inhibition by TSA, while the nuclear activity is inhibited completely. Responsible for the deacetylation of lysine residues on the N-terminal part of the core histones (H2A, H2B, H3 and H4). Histone deacetylation plays an important role in transcriptional regulation, cell cycle progression and developmental events. Histone deacetylases act via the formation of large multiprotein complexes. May play a role in the regulation of the timing of gene expression during the development and in the definition aspects of the phenotype that mediate social behavior in genetically heterogeneous groups. The protein is Histone deacetylase B (hdaB) of Dictyostelium discoideum (Social amoeba).